The sequence spans 491 residues: FAD-dependent monooxygenase cle3 (491 aa).

Residues Glu55, Gly69, Arg128, Asp330, and Ala343 each coordinate FAD. An N-linked (GlcNAc...) asparagine glycan is attached at Asn380. The chain crosses the membrane as a helical span at residues 462-482; that stretch reads STVVWTSLGILGLVVFLFLLF.

This sequence belongs to the paxM FAD-dependent monooxygenase family. It depends on FAD as a cofactor.

It localises to the membrane. It functions in the pathway secondary metabolite biosynthesis; terpenoid biosynthesis. Functionally, FAD-dependent monooxygenase; part of the cluster A that mediates the biosynthesis of chevalone E and its oxidized derivatives that possess a unique five-membered lactone ring and can synergistically enhance the cytotoxicity of doxorubicin (DOX) in breast cancer cells. Within the pathway, cle3 takes part to the biosynthesis of the molecular scaffold by catalyzing the formation of an (S)-epoxide ring at the terminal olefin of the geranylgeranyl group. The molecular scaffold is commonly biosynthesized by a series of enzymes including the non-reducing polyketide synthase (NR-PKS) cle1 that produces the alpha-pyrone triacetic acid lactone (TAL); The membrane-bound prenyltransferase cle5 that accepts TAL as its substrate to perform a C-3 geranylgeranylation reaction, in which the pathway-dedicated GGPS cle6 is required to provide GGPP, the other substrate of cle5; the FAD-dependent monooxygenase Cle3 that forms an (S)-epoxide ring at the terminal olefin of the geranylgeranyl group; and the terpene cyclase Cle7 that catalyzes the cyclization of the prenyl group that yields the pentacyclic pathway intermediate chevalone E. Chevalone E can derivatize into seven new oxidized analogs by the cytochrome P450 monooxygenases cle2 (acting at C-20) and cle4 (acting at C-11 and C-12). This chain is FAD-dependent monooxygenase cle3, found in Aspergillus versicolor.